Consider the following 114-residue polypeptide: MDSKWAAVLLLLLLLRNWGHAEEAGSWGEDQVFAEEDKGPHPSQYAHTPDRIQTPGSLMRVLLQAMERPRRNPAFLFQPQRFGRNAWGPWSKEQLSPQAREFWSLAAPQRFGKK.

An N-terminal signal peptide occupies residues 1–21 (MDSKWAAVLLLLLLLRNWGHA). A propeptide spanning residues 22–69 (EEAGSWGEDQVFAEEDKGPHPSQYAHTPDRIQTPGSLMRVLLQAMERP) is cleaved from the precursor. The tract at residues 29 to 51 (EDQVFAEEDKGPHPSQYAHTPDR) is disordered. The residue at position 82 (F82) is a Phenylalanine amide. Positions 85 to 100 (NAWGPWSKEQLSPQAR) are excised as a propeptide. Residue F111 is modified to Phenylalanine amide.

It belongs to the FARP (FMRFamide related peptide) family.

It is found in the secreted. In terms of biological role, morphine modulating peptides. Have wide-ranging physiologic effects, including the modulation of morphine-induced analgesia, elevation of arterial blood pressure, and increased somatostatin secretion from the pancreas. Neuropeptide FF and SF potentiate and sensitize ASIC2 and ASIC3 channels. This is Pro-FMRFamide-related neuropeptide FF (Npff) from Rattus norvegicus (Rat).